A 126-amino-acid chain; its full sequence is Aspartate 1-decarboxylase (126 aa).

The active-site Schiff-base intermediate with substrate; via pyruvic acid is Ser25. Ser25 is subject to Pyruvic acid (Ser). Thr57 provides a ligand contact to substrate. The Proton donor role is filled by Tyr58. 73–75 (GAA) lines the substrate pocket.

Belongs to the PanD family. As to quaternary structure, heterooctamer of four alpha and four beta subunits. Requires pyruvate as cofactor. In terms of processing, is synthesized initially as an inactive proenzyme, which is activated by self-cleavage at a specific serine bond to produce a beta-subunit with a hydroxyl group at its C-terminus and an alpha-subunit with a pyruvoyl group at its N-terminus.

Its subcellular location is the cytoplasm. It catalyses the reaction L-aspartate + H(+) = beta-alanine + CO2. Its pathway is cofactor biosynthesis; (R)-pantothenate biosynthesis; beta-alanine from L-aspartate: step 1/1. Its function is as follows. Catalyzes the pyruvoyl-dependent decarboxylation of aspartate to produce beta-alanine. This chain is Aspartate 1-decarboxylase, found in Escherichia coli O6:K15:H31 (strain 536 / UPEC).